A 427-amino-acid polypeptide reads, in one-letter code: Trigger factor (427 aa).

The PPIase FKBP-type domain occupies 163 to 248; that stretch reads GDTVVIDFVG…VHEVKSKEVP (86 aa).

Belongs to the FKBP-type PPIase family. Tig subfamily.

It localises to the cytoplasm. It carries out the reaction [protein]-peptidylproline (omega=180) = [protein]-peptidylproline (omega=0). Its function is as follows. Involved in protein export. Acts as a chaperone by maintaining the newly synthesized protein in an open conformation. Functions as a peptidyl-prolyl cis-trans isomerase. The sequence is that of Trigger factor from Streptococcus uberis (strain ATCC BAA-854 / 0140J).